We begin with the raw amino-acid sequence, 954 residues long: Valine--tRNA ligase (954 aa).

A 'HIGH' region motif is present at residues 48-58 (PNVTGSLHMGH). The 'KMSKS' region signature appears at 560 to 564 (KMSKS). Lys563 is a binding site for ATP. Residues 883 to 954 (AGFINKEAEL…QTQYQAIENL (72 aa)) are a coiled coil.

This sequence belongs to the class-I aminoacyl-tRNA synthetase family. ValS type 1 subfamily. As to quaternary structure, monomer.

The protein localises to the cytoplasm. It catalyses the reaction tRNA(Val) + L-valine + ATP = L-valyl-tRNA(Val) + AMP + diphosphate. Catalyzes the attachment of valine to tRNA(Val). As ValRS can inadvertently accommodate and process structurally similar amino acids such as threonine, to avoid such errors, it has a 'posttransfer' editing activity that hydrolyzes mischarged Thr-tRNA(Val) in a tRNA-dependent manner. The polypeptide is Valine--tRNA ligase (Actinobacillus pleuropneumoniae serotype 5b (strain L20)).